The sequence spans 40 residues: Meleagrin (40 aa).

Pyrrolidone carboxylic acid is present on Gln1. 3 disulfide bridges follow: Cys6–Cys33, Cys12–Cys28, and Cys16–Cys32.

Belongs to the transferrin family.

The sequence is that of Meleagrin from Meleagris gallopavo (Wild turkey).